A 769-amino-acid chain; its full sequence is Scarecrow-like protein 14 (769 aa).

4 disordered regions span residues M1 to L23, P128 to S157, T279 to N320, and T364 to K388. A GRAS domain is found at N384 to V765. Positions A391 to Q451 are leucine repeat I (LRI). Residues Y470–G536 are VHIID. The VHIID signature appears at I501–D505. The tract at residues E552–D584 is leucine repeat II (LRII). Residues V593 to N687 form a PFYRE region. The interval A690–V765 is SAW.

It belongs to the GRAS family. As to expression, expressed in roots, shoots, flowers and siliques.

Its subcellular location is the nucleus. Functionally, probable transcription factor involved in plant development. The chain is Scarecrow-like protein 14 (SCL14) from Arabidopsis thaliana (Mouse-ear cress).